A 163-amino-acid chain; its full sequence is Aspartate carbamoyltransferase regulatory chain (163 aa).

Residues C113, C118, C143, and C146 each coordinate Zn(2+).

Belongs to the PyrI family. In terms of assembly, contains catalytic and regulatory chains. Requires Zn(2+) as cofactor.

Involved in allosteric regulation of aspartate carbamoyltransferase. The polypeptide is Aspartate carbamoyltransferase regulatory chain (Caldivirga maquilingensis (strain ATCC 700844 / DSM 13496 / JCM 10307 / IC-167)).